Here is a 308-residue protein sequence, read N- to C-terminus: B3 domain-containing protein REM23 (308 aa).

Positions phenylalanine 19–aspartate 114 form a DNA-binding region, TF-B3 1. Residues glutamate 117–threonine 198 are disordered. A compositionally biased stretch (polar residues) spans proline 121 to arginine 133. The span at valine 134–glutamate 145 shows a compositional bias: basic and acidic residues. Over residues serine 149–glycine 166 the composition is skewed to polar residues. A compositionally biased stretch (basic residues) spans serine 168–lysine 177. Residues lysine 178–threonine 198 are compositionally biased toward basic and acidic residues. Residues valine 216–proline 308 constitute a DNA-binding region (TF-B3 2).

It localises to the nucleus. In Arabidopsis thaliana (Mouse-ear cress), this protein is B3 domain-containing protein REM23 (REM23).